The sequence spans 1226 residues: DNA-directed RNA polymerase subunit beta'' (1226 aa).

Residues Cys-223, Cys-297, Cys-304, and Cys-307 each coordinate Zn(2+).

The protein belongs to the RNA polymerase beta' chain family. RpoC2 subfamily. In terms of assembly, in plastids the minimal PEP RNA polymerase catalytic core is composed of four subunits: alpha, beta, beta', and beta''. When a (nuclear-encoded) sigma factor is associated with the core the holoenzyme is formed, which can initiate transcription. It depends on Zn(2+) as a cofactor.

The protein localises to the plastid. The protein resides in the chloroplast. The enzyme catalyses RNA(n) + a ribonucleoside 5'-triphosphate = RNA(n+1) + diphosphate. In terms of biological role, DNA-dependent RNA polymerase catalyzes the transcription of DNA into RNA using the four ribonucleoside triphosphates as substrates. This Pyropia yezoensis (Susabi-nori) protein is DNA-directed RNA polymerase subunit beta''.